Reading from the N-terminus, the 373-residue chain is MPDPILLTPGPLTTSATTRHAMQHDWGSWDAAFNQLTASVCADLVAIARGGDEYVCVPMQGSGTFSVEAALGTLVPRDGVVLVPDNGAYCARILKILGRLGVEAIALPFGEDAAVDPAAVEAAFAREPRITHVALVHLETSAGILNPLDAIAAMCRQHGRRLIVDAMSSFGALPIALADSGIDALVSASGKCLEGVPGMGFAIVRRDALDACEGNSPSLALDLQDQHAYLRKTGQWRFTPPTHVIAALRAALDQYLAEGGQPARGARYAENCRTLVESMRALGFAPFLDASVQAPVIVTFHAPDHPAYDFRRFYDAVRDAGFILYPGKLTKVETFRVGCIGAIDAGDIRRAVAAIAQALESLGIAMQRVSADA.

The residue at position 191 (lysine 191) is an N6-(pyridoxal phosphate)lysine.

This sequence belongs to the class-V pyridoxal-phosphate-dependent aminotransferase family. PhnW subfamily. As to quaternary structure, homodimer. Pyridoxal 5'-phosphate is required as a cofactor.

It carries out the reaction (2-aminoethyl)phosphonate + pyruvate = phosphonoacetaldehyde + L-alanine. Its function is as follows. Involved in phosphonate degradation. The sequence is that of 2-aminoethylphosphonate--pyruvate transaminase from Burkholderia ambifaria (strain MC40-6).